A 480-amino-acid chain; its full sequence is Probable GH family 25 lysozyme 3 (480 aa).

The first 20 residues, 1-20 (MNKLILSILSVLLIVSIASA), serve as a signal peptide directing secretion. In terms of domain architecture, Ch-type lysozyme spans 21–231 (GNGIDISSGT…STTSSSATSS (211 aa)). Residues Asp-25, Asp-114, and Glu-116 contribute to the active site. Residues 219 to 472 (SGSSTTSSSA…SSGSGNYTSG (254 aa)) are compositionally biased toward low complexity. The tract at residues 219–480 (SGSSTTSSSA…SGSGNGAFLF (262 aa)) is disordered. Residues Asn-423, Asn-428, Asn-437, Asn-446, and Asn-468 are each glycosylated (N-linked (GlcNAc...) asparagine).

The protein belongs to the glycosyl hydrolase 25 family.

The protein resides in the secreted. It carries out the reaction Hydrolysis of (1-&gt;4)-beta-linkages between N-acetylmuramic acid and N-acetyl-D-glucosamine residues in a peptidoglycan and between N-acetyl-D-glucosamine residues in chitodextrins.. This chain is Probable GH family 25 lysozyme 3, found in Dictyostelium discoideum (Social amoeba).